Here is a 699-residue protein sequence, read N- to C-terminus: MARKTPIERYRNIGICAHVDAGKTTTTERILFYTGLSHKIGEVHDGAATMDWMEQEQERGITITSAATTTFWRGMEAQFQDHRVNIIDTPGHVDFTIEVERSLRVLDGAVVVFCGSSGVEPQSETVWRQADKYHVPRMVFVNKMDRAGADFLRVVDQIKNRLGANPVPIQLNVGAEEDFKGVIDLIKMKMINWNEADQGMTFTYEEIPADMIELAEEWRNNLVEAAAEASEELMDKYLEEGELTEAEIKQALRARTLNNEIVLATCGSAFKNKGVQAVLDAVIEYLPSPIDVPAIKGIDENDNEVERHADDNEPFSALAFKIATDPFVGTLTFIRVYSGVVNTGDAVYNSVKQKKERFGRIVQMHANKREEIKEVRAGDIAAAIGLKDVTTGDTLCNSDHKVILERMEFPEPVIQIAVEPRSKADQEKMGIALGKLAAEDPSFRVETDAETGQTLISGMGELHLDIIVDRMKREFSVDCNVGKPQVAYRETIRGKSEVEGKFVRQSGGRGQYGHVWIKLEPSEPGAGFVFVDEVVGGVIPKEYISSVAKGIEEQMNSGVLAGYPVLDIKATLFDGSYHDVDSSEMAFKIAGSMAFKKGALEAQPVILEPMMKVEVTTPEDWMGDVVGDLNRRRGIIEGMDEGVAGLKIIRAQVPLSEMFGYATDLRSATQGRASYSMEFFEYAEVPKNIAEAIVAERGY.

The tr-type G domain maps to 8–290 (ERYRNIGICA…AVIEYLPSPI (283 aa)). GTP is bound by residues 17 to 24 (AHVDAGKT), 88 to 92 (DTPGH), and 142 to 145 (NKMD).

This sequence belongs to the TRAFAC class translation factor GTPase superfamily. Classic translation factor GTPase family. EF-G/EF-2 subfamily.

Its subcellular location is the cytoplasm. Functionally, catalyzes the GTP-dependent ribosomal translocation step during translation elongation. During this step, the ribosome changes from the pre-translocational (PRE) to the post-translocational (POST) state as the newly formed A-site-bound peptidyl-tRNA and P-site-bound deacylated tRNA move to the P and E sites, respectively. Catalyzes the coordinated movement of the two tRNA molecules, the mRNA and conformational changes in the ribosome. The chain is Elongation factor G 1 from Vibrio vulnificus (strain YJ016).